Consider the following 151-residue polypeptide: Austinoid biosynthesis clusters protein F (151 aa).

Belongs to the trt14 isomerase family. In terms of assembly, homodimer.

Its pathway is secondary metabolite biosynthesis; terpenoid biosynthesis. Its function is as follows. Part of the gene cluster B that mediates the biosynthesis of the fungal meroterpenoid acetoxydehydroaustin. The first step of the pathway is the synthesis of 3,5-dimethylorsellinic acid by the polyketide synthase ausA. 3,5-dimethylorsellinic acid is then prenylated by the polyprenyl transferase ausN. Further epoxidation by the FAD-dependent monooxygenase ausM and cyclization by the probable terpene cyclase ausL lead to the formation of protoaustinoid A. Protoaustinoid A is then oxidized to spiro-lactone preaustinoid A3 by the combined action of the FAD-binding monooxygenases ausB and ausC, and the dioxygenase ausE. Acid-catalyzed keto-rearrangement and ring contraction of the tetraketide portion of preaustinoid A3 by ausJ lead to the formation of preaustinoid A4. The aldo-keto reductase ausK, with the help of ausH, is involved in the next step by transforming preaustinoid A4 into isoaustinone which is in turn hydroxylated by the P450 monooxygenase ausI to form austinolide. The cytochrome P450 monooxygenase ausG then modifies austinolide to austinol. Austinol is further acetylated to austin by the O-acetyltransferase ausP, which spontaneously changes to dehydroaustin. The cytochrome P450 monooxygenase then converts dehydroaustin is into 7-dehydrodehydroaustin. The hydroxylation catalyzed by ausR permits the second O-acetyltransferase ausQ to add an additional acetyl group to the molecule, leading to the formation of acetoxydehydroaustin. Due to genetic rearrangements of the clusters and the subsequent loss of some enzymes, the end product of the Penicillium brasilianum austinoid biosynthesis clusters is acetoxydehydroaustin. This chain is Austinoid biosynthesis clusters protein F, found in Penicillium brasilianum.